The chain runs to 176 residues: Superoxide oxidase CybB (176 aa).

The Cytoplasmic segment spans residues 1–7 (MENKYSR). The chain crosses the membrane as a helical span at residues 8 to 29 (LQISIHWLVFLLVIAAYCAMEF). Histidine 13 is a heme b binding site. Residues 30-39 (RGFFPRSDRP) are Periplasmic-facing. A helical transmembrane segment spans residues 40-64 (LINMIHVSCGISILVLMVVRLLLRL). Heme b is bound at residue histidine 45. The Cytoplasmic portion of the chain corresponds to 65–77 (KYPTPPIIPKPKP). Residues 78–103 (MMTGLAHLGHLVIYLLFIALPVIGLV) traverse the membrane as a helical segment. Topologically, residues 104 to 135 (MMYNRGNPWFAFGLTMPYASEANFERVDSLKS) are periplasmic. A helical membrane pass occupies residues 136-158 (WHETLANLGYFVIGLHAAAALAH). Positions 137 and 151 each coordinate heme b. Topologically, residues 159–176 (HYFWKDNTLLRMMPRKRS) are cytoplasmic.

Belongs to the cytochrome b561 family. As to quaternary structure, monomer. Heme b is required as a cofactor.

It localises to the cell inner membrane. The enzyme catalyses a ubiquinol + 2 O2 = 2 superoxide + a ubiquinone + 2 H(+). It catalyses the reaction a menaquinol + 2 O2 = 2 superoxide + a menaquinone + 2 H(+). Quinone binding to the enzyme accelerates the reaction with superoxide. In terms of biological role, B-type di-heme cytochrome. Catalyzes the oxidation of superoxide to molecular oxygen and transfers the extracted electrons to ubiquinone through the two hemes. Can also use menaquinone. The enzyme may be responsible for the detoxification of the superoxide anion produced in the membrane or at its surface. However, it can also efficiently catalyze the formation of superoxide from ubiquinol under physiological conditions. The chain is Superoxide oxidase CybB from Escherichia coli (strain K12).